The primary structure comprises 223 residues: DNA-directed RNA polymerase III subunit RPC7 (223 aa).

The span at 111–124 (MMPRKKCKKGDPKS) shows a compositional bias: basic and acidic residues. Residues 111 to 223 (MMPRKKCKKG…SDDNMDEATY (113 aa)) form a disordered region. Position 134 is a phosphothreonine (Thr-134). A compositionally biased stretch (basic and acidic residues) spans 144–156 (KTIEELEKRGEGE). At Ser-158 the chain carries Phosphoserine. Composition is skewed to acidic residues over residues 173-198 (KDDE…EEND) and 206-223 (NGDD…EATY).

The protein belongs to the eukaryotic RPC7 RNA polymerase subunit family. As to quaternary structure, component of the RNA polymerase III complex consisting of 17 subunits: a ten-subunit horseshoe-shaped catalytic core composed of POLR3A/RPC1, POLR3B/RPC2, POLR1C/RPAC1, POLR1D/RPAC2, POLR3K/RPC10, POLR2E/RPABC1, POLR2F/RPABC2, POLR2H/RPABC3, POLR2K/RPABC4 and POLR2L/RPABC5; a mobile stalk composed of two subunits POLR3H/RPC8 and CRCP/RPC9, protruding from the core and functioning primarily in transcription initiation; and additional subunits homologous to general transcription factors of the RNA polymerase II machinery, POLR3C/RPC3-POLR3F/RPC6-POLR3G/RPC7 heterotrimer required for transcription initiation and POLR3D/RPC4-POLR3E/RPC5 heterodimer involved in both transcription initiation and termination. Directly interacts with POLR3C/RPC62. Also found in a trimeric complex with POLR3C/RPC3 and POLR3GL. Expressed at low levels in the liver.

The protein localises to the nucleus. The protein resides in the cytoplasm. In terms of biological role, DNA-dependent RNA polymerase catalyzes the transcription of DNA into RNA using the four ribonucleoside triphosphates as substrates. Specific peripheric component of RNA polymerase III (Pol III) which synthesizes small non-coding RNAs including 5S rRNA, snRNAs, tRNAs and miRNAs from at least 500 distinct genomic loci. Acts as a long tether that bridges POLR3C/RPC3-POLR3F/RPC6-POLR3G/RPC7 heterotrimer and the mobile stalk of Pol III, coordinating the dynamics of Pol III stalk and clamp modules during the transition from apo to elongation state. Pol III exists as two alternative complexes defined by the mutually exclusive incorporation of subunit POLR3G/RPC7alpha or POLR3GL/RPC7beta. POLR3G/RPC7alpha modulates Pol III transcriptome by specifically enhancing the transcription of snaR-A non-coding RNAs. At resting state, occupies the active site of apo Pol III and keeps Pol III in an autoinhibitory mode, preventing non-specific transcription. Pol III plays a key role in sensing and limiting infection by intracellular bacteria and DNA viruses. Acts as a nuclear and cytosolic DNA sensor involved in innate immune response. Can sense non-self dsDNA that serves as template for transcription into dsRNA. The non-self RNA polymerase III transcripts, such as Epstein-Barr virus-encoded RNAs (EBERs), induce type I interferon and NF-kappa-B through the RIG-I pathway. This chain is DNA-directed RNA polymerase III subunit RPC7 (Polr3g), found in Mus musculus (Mouse).